We begin with the raw amino-acid sequence, 845 residues long: Beta-mannosidase B (845 aa).

The disordered stretch occupies residues 1 to 20; it reads MSKLQQFPLSKGWSFRDSED. Residue Asn252 is glycosylated (N-linked (GlcNAc...) asparagine). Residue Glu432 is the Proton donor of the active site. 2 N-linked (GlcNAc...) asparagine glycosylation sites follow: Asn717 and Asn723.

Belongs to the glycosyl hydrolase 2 family. Beta-mannosidase B subfamily.

It carries out the reaction Hydrolysis of terminal, non-reducing beta-D-mannose residues in beta-D-mannosides.. It participates in glycan metabolism; N-glycan degradation. Exoglycosidase that cleaves the single beta-linked mannose residue from the non-reducing end of beta-mannosidic oligosaccharides of various complexity and length. Prefers mannobiose over mannotriose and has no activity against polymeric mannan. Is also severely restricted by galactosyl substitutions at the +1 subsite. This chain is Beta-mannosidase B (mndB), found in Neosartorya fischeri (strain ATCC 1020 / DSM 3700 / CBS 544.65 / FGSC A1164 / JCM 1740 / NRRL 181 / WB 181) (Aspergillus fischerianus).